A 170-amino-acid chain; its full sequence is CDP-archaeol synthase (170 aa).

5 consecutive transmembrane segments (helical) span residues 6-26, 53-73, 83-103, 114-134, and 140-160; these read LLWAFWYILPAYFANASPVLV, GLIGGVAIGTAVGALQYFITP, LLLAFLLSFGALFGDLVGSFF, PAIGLDQLGFLISALAFAYPV, and GQIIFLLVVSPFVHWGANYFA.

It belongs to the CDP-archaeol synthase family. The cofactor is Mg(2+).

It is found in the cell membrane. It carries out the reaction 2,3-bis-O-(geranylgeranyl)-sn-glycerol 1-phosphate + CTP + H(+) = CDP-2,3-bis-O-(geranylgeranyl)-sn-glycerol + diphosphate. It functions in the pathway membrane lipid metabolism; glycerophospholipid metabolism. Functionally, catalyzes the formation of CDP-2,3-bis-(O-geranylgeranyl)-sn-glycerol (CDP-archaeol) from 2,3-bis-(O-geranylgeranyl)-sn-glycerol 1-phosphate (DGGGP) and CTP. This reaction is the third ether-bond-formation step in the biosynthesis of archaeal membrane lipids. This chain is CDP-archaeol synthase, found in Thermococcus onnurineus (strain NA1).